A 260-amino-acid chain; its full sequence is 3-oxoadipate CoA-transferase subunit B (260 aa).

E51 is an active-site residue.

Belongs to the 3-oxoacid CoA-transferase subunit B family. In terms of assembly, heterotetramer composed of 2 A and 2 B subunits.

It catalyses the reaction 3-oxoadipate + succinyl-CoA = 3-oxoadipyl-CoA + succinate. The protein operates within aromatic compound metabolism; beta-ketoadipate pathway; acetyl-CoA and succinyl-CoA from 3-oxoadipate: step 1/2. This chain is 3-oxoadipate CoA-transferase subunit B (catJ), found in Pseudomonas knackmussii (strain DSM 6978 / CCUG 54928 / LMG 23759 / B13).